Here is a 273-residue protein sequence, read N- to C-terminus: Testis-specific serine/threonine-protein kinase 6 (273 aa).

One can recognise a Protein kinase domain in the interval 12–267; it reads YKLGRTIGEG…AGQVARNCWL (256 aa). ATP-binding positions include 18-26 and K41; that span reads IGEGSYSKV. D135 functions as the Proton acceptor in the catalytic mechanism.

Belongs to the protein kinase superfamily. CAMK Ser/Thr protein kinase family. As to quaternary structure, microtubule inner protein component of sperm flagellar doublet microtubules. Interacts with HSP90; this interaction stabilizes and activates TSSK6. Interacts with the heat shock proteins HSPCB, HSPA8 and HSPA1A. These interactions appear to be required for TSSK6 kinase activity. Interacts with TSACC; this interaction is direct and recruits TSACC to HSP90, which is essential for kinase activity. Mg(2+) is required as a cofactor. In terms of processing, autophosphorylated. Post-translationally, ubiquitinated; HSP90 activity negatively regulates ubiquitination and degradation. In terms of tissue distribution, highly expressed in testis. Expressed at lower levels in colon, small intestine, ovary, prostate, thymus, spleen and peripheral blood leukocytes.

It is found in the cytoplasm. The protein resides in the cytoskeleton. The protein localises to the flagellum axoneme. It localises to the nucleus. The enzyme catalyses L-seryl-[protein] + ATP = O-phospho-L-seryl-[protein] + ADP + H(+). It carries out the reaction L-threonyl-[protein] + ATP = O-phospho-L-threonyl-[protein] + ADP + H(+). Serine/threonine-protein kinase component of the sperm flagellar doublet microtubules. May act as a regulator of sperm motility by mediating phosphorylation of sperm doublet microtubule proteins. Plays a role in DNA condensation during postmeiotic chromatin remodeling and histone-to-protamine transition during spermatogenesis. This is Testis-specific serine/threonine-protein kinase 6 from Homo sapiens (Human).